We begin with the raw amino-acid sequence, 616 residues long: Dihydroxy-acid dehydratase (616 aa).

D81 is a binding site for Mg(2+). Residue C122 coordinates [2Fe-2S] cluster. D123 and K124 together coordinate Mg(2+). The residue at position 124 (K124) is an N6-carboxylysine. C195 provides a ligand contact to [2Fe-2S] cluster. E491 lines the Mg(2+) pocket. S517 serves as the catalytic Proton acceptor.

This sequence belongs to the IlvD/Edd family. Homodimer. [2Fe-2S] cluster serves as cofactor. The cofactor is Mg(2+).

It carries out the reaction (2R)-2,3-dihydroxy-3-methylbutanoate = 3-methyl-2-oxobutanoate + H2O. The catalysed reaction is (2R,3R)-2,3-dihydroxy-3-methylpentanoate = (S)-3-methyl-2-oxopentanoate + H2O. It functions in the pathway amino-acid biosynthesis; L-isoleucine biosynthesis; L-isoleucine from 2-oxobutanoate: step 3/4. Its pathway is amino-acid biosynthesis; L-valine biosynthesis; L-valine from pyruvate: step 3/4. Its function is as follows. Functions in the biosynthesis of branched-chain amino acids. Catalyzes the dehydration of (2R,3R)-2,3-dihydroxy-3-methylpentanoate (2,3-dihydroxy-3-methylvalerate) into 2-oxo-3-methylpentanoate (2-oxo-3-methylvalerate) and of (2R)-2,3-dihydroxy-3-methylbutanoate (2,3-dihydroxyisovalerate) into 2-oxo-3-methylbutanoate (2-oxoisovalerate), the penultimate precursor to L-isoleucine and L-valine, respectively. This chain is Dihydroxy-acid dehydratase, found in Blochmanniella pennsylvanica (strain BPEN).